The following is a 423-amino-acid chain: CDP-diacylglycerol--serine O-phosphatidyltransferase 2 (423 aa).

9 helical membrane-spanning segments follow: residues 38–58 (PHTI…SGAL), 77–97 (WAMI…TILI), 103–123 (VWRL…FLLF), 195–215 (LLLW…RHML), 222–242 (WWDS…WAGM), 294–314 (FVQV…TFFL), 319–339 (WIPP…LIAI), 359–379 (GAFC…CMKF), and 390–410 (TWLI…LLAW).

It belongs to the CDP-alcohol phosphatidyltransferase class-I family.

It localises to the endoplasmic reticulum membrane. It catalyses the reaction a CDP-1,2-diacyl-sn-glycerol + L-serine = a 1,2-diacyl-sn-glycero-3-phospho-L-serine + CMP + H(+). It functions in the pathway phospholipid metabolism; phosphatidylethanolamine biosynthesis; phosphatidylethanolamine from CDP-diacylglycerol: step 1/2. Its function is as follows. Catalyzes a base-exchange reaction in which the polar head group of phosphatidylethanolamine (PE) or phosphatidylcholine (PC) is replaced by L-serine. The protein is CDP-diacylglycerol--serine O-phosphatidyltransferase 2 (PSS2) of Oryza sativa subsp. japonica (Rice).